The following is a 72-amino-acid chain: MAKDDVIEIDGNVVEALPNATFKVELDNKHVILCHIAGKMRMHYIKIMPGDRVKVELTPYSLDKGRITYRYK.

Residues 1–72 (MAKDDVIEID…DKGRITYRYK (72 aa)) form the S1-like domain.

The protein belongs to the IF-1 family. In terms of assembly, component of the 30S ribosomal translation pre-initiation complex which assembles on the 30S ribosome in the order IF-2 and IF-3, IF-1 and N-formylmethionyl-tRNA(fMet); mRNA recruitment can occur at any time during PIC assembly.

It is found in the cytoplasm. In terms of biological role, one of the essential components for the initiation of protein synthesis. Stabilizes the binding of IF-2 and IF-3 on the 30S subunit to which N-formylmethionyl-tRNA(fMet) subsequently binds. Helps modulate mRNA selection, yielding the 30S pre-initiation complex (PIC). Upon addition of the 50S ribosomal subunit IF-1, IF-2 and IF-3 are released leaving the mature 70S translation initiation complex. The protein is Translation initiation factor IF-1 of Campylobacter curvus (strain 525.92).